The sequence spans 205 residues: 7-methyl-GTP pyrophosphatase (205 aa).

Asp79 (proton acceptor) is an active-site residue.

This sequence belongs to the Maf family. YceF subfamily. The cofactor is a divalent metal cation.

The protein resides in the cytoplasm. It carries out the reaction N(7)-methyl-GTP + H2O = N(7)-methyl-GMP + diphosphate + H(+). Its function is as follows. Nucleoside triphosphate pyrophosphatase that hydrolyzes 7-methyl-GTP (m(7)GTP). May have a dual role in cell division arrest and in preventing the incorporation of modified nucleotides into cellular nucleic acids. This chain is 7-methyl-GTP pyrophosphatase, found in Paraburkholderia xenovorans (strain LB400).